We begin with the raw amino-acid sequence, 54 residues long: UPF0391 membrane protein Tbd_2238 (54 aa).

The next 2 helical transmembrane spans lie at 5 to 25 (ALVF…GIAA) and 28 to 48 (VGIA…TFVV).

Belongs to the UPF0391 family.

The protein resides in the cell membrane. The protein is UPF0391 membrane protein Tbd_2238 of Thiobacillus denitrificans (strain ATCC 25259 / T1).